The primary structure comprises 429 residues: Enolase (429 aa).

A (2R)-2-phosphoglycerate-binding site is contributed by Gln163. Catalysis depends on Glu205, which acts as the Proton donor. Mg(2+) is bound by residues Asp242, Glu285, and Asp312. (2R)-2-phosphoglycerate contacts are provided by Lys337, Arg366, Ser367, and Lys388. The active-site Proton acceptor is the Lys337.

The protein belongs to the enolase family. Mg(2+) is required as a cofactor.

It localises to the cytoplasm. Its subcellular location is the secreted. The protein localises to the cell surface. The catalysed reaction is (2R)-2-phosphoglycerate = phosphoenolpyruvate + H2O. Its pathway is carbohydrate degradation; glycolysis; pyruvate from D-glyceraldehyde 3-phosphate: step 4/5. Catalyzes the reversible conversion of 2-phosphoglycerate (2-PG) into phosphoenolpyruvate (PEP). It is essential for the degradation of carbohydrates via glycolysis. This chain is Enolase, found in Azoarcus sp. (strain BH72).